We begin with the raw amino-acid sequence, 320 residues long: o-succinylbenzoate synthase (320 aa).

K133 functions as the Proton donor in the catalytic mechanism. Mg(2+) is bound by residues D161, E190, and D213. K235 serves as the catalytic Proton acceptor.

Belongs to the mandelate racemase/muconate lactonizing enzyme family. MenC type 1 subfamily. Requires a divalent metal cation as cofactor.

It carries out the reaction (1R,6R)-6-hydroxy-2-succinyl-cyclohexa-2,4-diene-1-carboxylate = 2-succinylbenzoate + H2O. Its pathway is quinol/quinone metabolism; 1,4-dihydroxy-2-naphthoate biosynthesis; 1,4-dihydroxy-2-naphthoate from chorismate: step 4/7. It functions in the pathway quinol/quinone metabolism; menaquinone biosynthesis. Converts 2-succinyl-6-hydroxy-2,4-cyclohexadiene-1-carboxylate (SHCHC) to 2-succinylbenzoate (OSB). The sequence is that of o-succinylbenzoate synthase from Escherichia coli O45:K1 (strain S88 / ExPEC).